A 166-amino-acid chain; its full sequence is UPF0304 protein VS_1049 (166 aa).

Belongs to the UPF0304 family.

The polypeptide is UPF0304 protein VS_1049 (Vibrio atlanticus (strain LGP32) (Vibrio splendidus (strain Mel32))).